We begin with the raw amino-acid sequence, 255 residues long: NAD kinase (255 aa).

D44 functions as the Proton acceptor in the catalytic mechanism. Residues 44-45 (DG), H49, 114-115 (NE), D144, A152, 155-160 (SAYNLS), and Q216 contribute to the NAD(+) site.

It belongs to the NAD kinase family. The cofactor is a divalent metal cation.

It is found in the cytoplasm. The enzyme catalyses NAD(+) + ATP = ADP + NADP(+) + H(+). Its function is as follows. Involved in the regulation of the intracellular balance of NAD and NADP, and is a key enzyme in the biosynthesis of NADP. Catalyzes specifically the phosphorylation on 2'-hydroxyl of the adenosine moiety of NAD to yield NADP. The protein is NAD kinase of Rickettsia felis (strain ATCC VR-1525 / URRWXCal2) (Rickettsia azadi).